A 931-amino-acid chain; its full sequence is Protocadherin gamma-B2 (931 aa).

The N-terminal stretch at 1 to 30 is a signal peptide; sequence MKASSGRCGLVRWLQVLLPFLLSLFPGALP. Cadherin domains follow at residues 31 to 133, 134 to 242, 243 to 347, 348 to 452, 453 to 562, and 570 to 675; these read VQIR…TPLF, KQTK…PPVF, SQDV…APEV, IVTS…APVF, QQTS…APRV, and DGSA…LPDL. At 31-691 the chain is on the extracellular side; sequence VQIRYSIPEE…SDPQAELQFY (661 aa). 2 N-linked (GlcNAc...) asparagine glycosylation sites follow: N419 and N545. A helical membrane pass occupies residues 692-712; the sequence is LVVALALISVLFFLAVILAIS. Residues 713–931 are Cytoplasmic-facing; that stretch reads LRLRRSSRSD…KKKSGKKEKK (219 aa). Disordered regions lie at residues 814-840 and 901-931; these read DWRF…WPNN and ATLT…KEKK. The span at 815–840 shows a compositional bias: polar residues; the sequence is WRFSQAQRPGTSGSQNGDDTGTWPNN. A compositionally biased stretch (basic residues) spans 921–931; the sequence is NKKKSGKKEKK.

It is found in the cell membrane. Potential calcium-dependent cell-adhesion protein. May be involved in the establishment and maintenance of specific neuronal connections in the brain. This is Protocadherin gamma-B2 (PCDHGB2) from Pan troglodytes (Chimpanzee).